Consider the following 237-residue polypeptide: Placenta-expressed transcript 1 protein (237 aa).

A signal peptide spans 1 to 27; that stretch reads MLSLRSLLPHLGLFLCLALHLSPSLSA. 4 N-linked (GlcNAc...) asparagine glycosylation sites follow: Asn30, Asn67, Asn103, and Asn136. The segment covering 145–162 has biased composition (polar residues); it reads KMEQVQPSASTPIPESSE. The segment at 145–170 is disordered; it reads KMEQVQPSASTPIPESSETSQTINTT. The GPI-anchor amidated serine moiety is linked to residue Ser218. Residues 219–237 constitute a propeptide, removed in mature form; it reads PLAGALHILLVFLISKLLF.

Post-translationally, N-glycosylated. GPI-anchored. Present in hair follicle cells and sebaceous gland of skin, ciliated epithelial cells of trachea and bronchial tube, striated portion of submandibular gland, distal convoluted tubule cells of kidney, ciliated epithelial cells of oviduct, medulla of adrenal gland and anterior lobe of pituitary gland. Expressed in keratinocytes of the hair follicle at the trichilemmal zone corresponding to the terminally differentiated outermost suprabasal outer root sheath (ORS), including that of the sebaceous gland duct (SGD) and the directly adjacent upper distal end of the companion layer (CL). Expression is similar in all hair follicle growth stages. Also detected during both the early and late anagen phases above the bulge of stem cells. Expressed at the leading edge of the epidermal wound. Not expressed in the interfollicular epidermis (IFE), inner root sheath (IRS) and hair fiber. Highly expressed in placenta. Detected in mammary and prostate epithelia and in the pancreas (at protein level).

Its subcellular location is the apical cell membrane. Modulates leading keratinocyte migration and cellular adhesion to matrix proteins during a wound-healing response and promotes wound repair. May play a role during trichilemmal differentiation of the hair follicle. This is Placenta-expressed transcript 1 protein (Plet1) from Mus musculus (Mouse).